Consider the following 153-residue polypeptide: Ribosome maturation factor RimP (153 aa).

Belongs to the RimP family.

The protein localises to the cytoplasm. Required for maturation of 30S ribosomal subunits. This chain is Ribosome maturation factor RimP, found in Christiangramia forsetii (strain DSM 17595 / CGMCC 1.15422 / KT0803) (Gramella forsetii).